We begin with the raw amino-acid sequence, 232 residues long: Rho-related GTP-binding protein Rho6 (232 aa).

Residues 23–28 (QCGKTA), 38–45 (YPETYVPT), 67–71 (DTSGS), 125–128 (CKTD), and 169–170 (AF) each bind GTP. Positions 42-50 (YVPTVFENY) match the Effector region motif. Cys229 bears the Cysteine methyl ester mark. Residue Cys229 is the site of S-geranylgeranyl cysteine attachment. A propeptide spans 230–232 (SIM) (removed in mature form).

The protein belongs to the small GTPase superfamily. Rho family. In terms of assembly, binds GRB7 and PLXNB1. Interacts with UBXD5. Interacts with PLXNA2. In terms of tissue distribution, mostly expressed in brain and liver.

The protein localises to the cell membrane. The protein resides in the cytoplasm. It localises to the cytoskeleton. In terms of biological role, lacks intrinsic GTPase activity. Has a low affinity for GDP, and constitutively binds GTP. Controls rearrangements of the actin cytoskeleton. Induces the Rac-dependent neuritic process formation in part by disruption of the cortical actin filaments. Causes the formation of many neuritic processes from the cell body with disruption of the cortical actin filaments. This chain is Rho-related GTP-binding protein Rho6 (RND1), found in Homo sapiens (Human).